The sequence spans 206 residues: Protein FAM228A (206 aa).

The protein belongs to the FAM228 family.

This Homo sapiens (Human) protein is Protein FAM228A (FAM228A).